The sequence spans 595 residues: Alpha-1,3-galactosidase B (595 aa).

Residues M1 to A22 form the signal peptide. PbH1 repeat units lie at residues T432 to T454, P455 to G477, and C488 to D541.

This sequence belongs to the glycosyl hydrolase 110 family. B subfamily.

The catalysed reaction is Hydrolysis of terminal, non-reducing branched (1-&gt;3)-alpha-D-galactosidic residues, producing free D-galactose.. It catalyses the reaction Hydrolysis of terminal, non-reducing linear (1-&gt;3)-alpha-D-galactosidic residues, producing free D-galactose.. It carries out the reaction Hydrolysis of terminal, non-reducing alpha-D-galactose residues in alpha-D-galactosides, including galactose oligosaccharides, galactomannans and galactolipids.. Alpha-galactosidase. Removes both branched alpha-1,3-linked galactose residues of blood group B antigens and linear alpha-1,3-linked galactose structures. This is Alpha-1,3-galactosidase B (glaB) from Bacteroides fragilis (strain YCH46).